The primary structure comprises 96 residues: Large ribosomal subunit protein bL27 (96 aa).

A propeptide spanning residues 1-9 (MLRLDLQFF) is cleaved from the precursor.

This sequence belongs to the bacterial ribosomal protein bL27 family. The N-terminus is cleaved by ribosomal processing cysteine protease Prp.

This chain is Large ribosomal subunit protein bL27, found in Anoxybacillus flavithermus (strain DSM 21510 / WK1).